The primary structure comprises 378 residues: Bifunctional enzyme IspD/IspF (378 aa).

Positions 1–222 (MTETVAIIVA…RLLSPTGAPR (222 aa)) are 2-C-methyl-D-erythritol 4-phosphate cytidylyltransferase. Positions 222–378 (RIGKGYDVHE…EAVALLMPKG (157 aa)) are 2-C-methyl-D-erythritol 2,4-cyclodiphosphate synthase. Asp228 and His230 together coordinate a divalent metal cation. 4-CDP-2-C-methyl-D-erythritol 2-phosphate-binding positions include 228–230 (DVH) and 254–255 (HS). A divalent metal cation is bound at residue His262. 4-CDP-2-C-methyl-D-erythritol 2-phosphate contacts are provided by residues 276–278 (DIG), 352–355 (TTTE), Phe359, and Arg362.

In the N-terminal section; belongs to the IspD/TarI cytidylyltransferase family. IspD subfamily. It in the C-terminal section; belongs to the IspF family. The cofactor is a divalent metal cation.

The catalysed reaction is 2-C-methyl-D-erythritol 4-phosphate + CTP + H(+) = 4-CDP-2-C-methyl-D-erythritol + diphosphate. The enzyme catalyses 4-CDP-2-C-methyl-D-erythritol 2-phosphate = 2-C-methyl-D-erythritol 2,4-cyclic diphosphate + CMP. It functions in the pathway isoprenoid biosynthesis; isopentenyl diphosphate biosynthesis via DXP pathway; isopentenyl diphosphate from 1-deoxy-D-xylulose 5-phosphate: step 2/6. Its pathway is isoprenoid biosynthesis; isopentenyl diphosphate biosynthesis via DXP pathway; isopentenyl diphosphate from 1-deoxy-D-xylulose 5-phosphate: step 4/6. In terms of biological role, bifunctional enzyme that catalyzes the formation of 4-diphosphocytidyl-2-C-methyl-D-erythritol from CTP and 2-C-methyl-D-erythritol 4-phosphate (MEP) (IspD), and catalyzes the conversion of 4-diphosphocytidyl-2-C-methyl-D-erythritol 2-phosphate (CDP-ME2P) to 2-C-methyl-D-erythritol 2,4-cyclodiphosphate (ME-CPP) with a corresponding release of cytidine 5-monophosphate (CMP) (IspF). This is Bifunctional enzyme IspD/IspF from Hyphomonas neptunium (strain ATCC 15444).